A 74-amino-acid polypeptide reads, in one-letter code: Translation initiation factor IF-1 (74 aa).

The S1-like domain occupies 1-72 (MSKQDLIEME…TKGRITYRLR (72 aa)).

The protein belongs to the IF-1 family. As to quaternary structure, component of the 30S ribosomal translation pre-initiation complex which assembles on the 30S ribosome in the order IF-2 and IF-3, IF-1 and N-formylmethionyl-tRNA(fMet); mRNA recruitment can occur at any time during PIC assembly.

It is found in the cytoplasm. One of the essential components for the initiation of protein synthesis. Stabilizes the binding of IF-2 and IF-3 on the 30S subunit to which N-formylmethionyl-tRNA(fMet) subsequently binds. Helps modulate mRNA selection, yielding the 30S pre-initiation complex (PIC). Upon addition of the 50S ribosomal subunit IF-1, IF-2 and IF-3 are released leaving the mature 70S translation initiation complex. The sequence is that of Translation initiation factor IF-1 from Trichodesmium erythraeum (strain IMS101).